A 205-amino-acid chain; its full sequence is Molybdopterin synthase catalytic subunit (205 aa).

The disordered stretch occupies residues 1 to 36 (MQHPTLQPEVDPNPVVSSSSSSSSSNPLPAHLNPAN). Substrate is bound by residues 146–147 (HR), K162, and 169–171 (KRE). Residues 179–205 (GEGEGEWRANRDTDSQGNCRGDKVAEG) are disordered. The span at 183 to 205 (GEWRANRDTDSQGNCRGDKVAEG) shows a compositional bias: basic and acidic residues.

It belongs to the MoaE family. MOCS2B subfamily. In terms of assembly, heterotetramer; composed of 2 small (MOCS2A) and 2 large (MOCS2B) subunits.

It localises to the cytoplasm. The enzyme catalyses 2 [molybdopterin-synthase sulfur-carrier protein]-C-terminal-Gly-aminoethanethioate + cyclic pyranopterin phosphate + H2O = molybdopterin + 2 [molybdopterin-synthase sulfur-carrier protein]-C-terminal Gly-Gly + 2 H(+). The protein operates within cofactor biosynthesis; molybdopterin biosynthesis. In terms of biological role, catalytic subunit of the molybdopterin synthase complex, a complex that catalyzes the conversion of precursor Z into molybdopterin. Acts by mediating the incorporation of 2 sulfur atoms from thiocarboxylated MOCS2A into precursor Z to generate a dithiolene group. This is Molybdopterin synthase catalytic subunit from Ajellomyces capsulatus (strain NAm1 / WU24) (Darling's disease fungus).